We begin with the raw amino-acid sequence, 160 residues long: Cytochrome b6-f complex subunit 4 (160 aa).

Transmembrane regions (helical) follow at residues 36 to 56 (LLYIFPVVILGTIACNVGLAV), 95 to 115 (LLGVLLMVSVPAGLLTVPFLE), and 131 to 151 (TVFLIGTAAALWLGIGATLPI).

It belongs to the cytochrome b family. PetD subfamily. The 4 large subunits of the cytochrome b6-f complex are cytochrome b6, subunit IV (17 kDa polypeptide, petD), cytochrome f and the Rieske protein, while the 4 small subunits are petG, petL, petM and petN. The complex functions as a dimer.

It is found in the plastid. It localises to the chloroplast thylakoid membrane. In terms of biological role, component of the cytochrome b6-f complex, which mediates electron transfer between photosystem II (PSII) and photosystem I (PSI), cyclic electron flow around PSI, and state transitions. This Arabidopsis thaliana (Mouse-ear cress) protein is Cytochrome b6-f complex subunit 4.